The following is a 593-amino-acid chain: Uroporphyrinogen-III C-methyltransferase (593 aa).

Residues 278-303 (ETSSSPNKKTKQETVTEGVVPPTDEN) form a disordered region.

This sequence belongs to the precorrin methyltransferase family.

It catalyses the reaction uroporphyrinogen III + 2 S-adenosyl-L-methionine = precorrin-2 + 2 S-adenosyl-L-homocysteine + H(+). In terms of biological role, siroheme synthase involved in methionine biosynthesis. This Saccharomyces cerevisiae (strain ATCC 204508 / S288c) (Baker's yeast) protein is Uroporphyrinogen-III C-methyltransferase.